Here is a 968-residue protein sequence, read N- to C-terminus: RNA polymerase-associated protein RapA (968 aa).

Residues 164 to 334 form the Helicase ATP-binding domain; sequence DVGRRHAPRV…FARLRLLDPN (171 aa). Position 177 to 184 (177 to 184) interacts with ATP; sequence DEVGLGKT. Positions 280 to 283 match the DEAH box motif; that stretch reads DEAH. The Helicase C-terminal domain maps to 490 to 662; the sequence is RVEWLMGYLT…YLASPDQTEG (173 aa).

The protein belongs to the SNF2/RAD54 helicase family. RapA subfamily. In terms of assembly, interacts with the RNAP. Has a higher affinity for the core RNAP than for the holoenzyme. Its ATPase activity is stimulated by binding to RNAP.

Transcription regulator that activates transcription by stimulating RNA polymerase (RNAP) recycling in case of stress conditions such as supercoiled DNA or high salt concentrations. Probably acts by releasing the RNAP, when it is trapped or immobilized on tightly supercoiled DNA. Does not activate transcription on linear DNA. Probably not involved in DNA repair. In Shigella flexneri serotype 5b (strain 8401), this protein is RNA polymerase-associated protein RapA.